The following is a 383-amino-acid chain: Chitinase-3-like protein 1 (383 aa).

The N-terminal stretch at 1–21 (MGVKASQTGFVVLVLLQCCSA) is a signal peptide. Residues 22–383 (YKLVCYYTSW…NAIKDALAAT (362 aa)) enclose the GH18 domain. C26 and C51 are joined by a disulfide. N-linked (GlcNAc...) asparagine glycosylation is present at N60. Chitin is bound by residues 70–71 (EW), 97–100 (GGWN), Y141, 204–207 (MTYD), and R263. Cysteines 300 and 364 form a disulfide. The important for AKT1 activation and IL8 production stretch occupies residues 324–338 (QWVGYDDQESVKSKV). W352 contributes to the chitin binding site.

This sequence belongs to the glycosyl hydrolase 18 family. In terms of assembly, monomer. Post-translationally, glycosylated. As to expression, present in activated macrophages, articular chondrocytes, synovial cells as well as in liver. Very low or undetectable expression in non-inflammatory colon. Undetectable in muscle tissues, lung, pancreas, mononuclear cells, or fibroblasts.

It localises to the secreted. The protein resides in the extracellular space. The protein localises to the cytoplasm. It is found in the perinuclear region. Its subcellular location is the endoplasmic reticulum. In terms of biological role, carbohydrate-binding lectin with a preference for chitin. Has no chitinase activity. May play a role in tissue remodeling and in the capacity of cells to respond to and cope with changes in their environment. Plays a role in T-helper cell type 2 (Th2) inflammatory response and IL-13-induced inflammation, regulating allergen sensitization, inflammatory cell apoptosis, dendritic cell accumulation and M2 macrophage differentiation. Facilitates invasion of pathogenic enteric bacteria into colonic mucosa and lymphoid organs. Mediates activation of AKT1 signaling pathway and subsequent IL8 production in colonic epithelial cells. Regulates antibacterial responses in lung by contributing to macrophage bacterial killing, controlling bacterial dissemination and augmenting host tolerance. Also regulates hyperoxia-induced injury, inflammation and epithelial apoptosis in lung. The protein is Chitinase-3-like protein 1 (CHI3L1) of Homo sapiens (Human).